The chain runs to 539 residues: CTP synthase (539 aa).

The interval 1–267 (MKEAKFIFVT…GTQVLEHFHL (267 aa)) is amidoligase domain. Ser15 is a CTP binding site. Residue Ser15 coordinates UTP. Residues 16-21 (SLGKGL) and Asp73 contribute to the ATP site. Residues Asp73 and Glu141 each contribute to the Mg(2+) site. CTP contacts are provided by residues 148–150 (DIE), 188–193 (KTKPTQ), and Lys224. UTP is bound by residues 188–193 (KTKPTQ) and Lys224. The region spanning 292–536 (TVSIVGKYTE…IKAVVNKVKK (245 aa)) is the Glutamine amidotransferase type-1 domain. Gly359 lines the L-glutamine pocket. Cys386 (nucleophile; for glutamine hydrolysis) is an active-site residue. L-glutamine is bound by residues 387–390 (LGMQ), Glu410, and Arg464. Active-site residues include His509 and Glu511.

This sequence belongs to the CTP synthase family. In terms of assembly, homotetramer.

The enzyme catalyses UTP + L-glutamine + ATP + H2O = CTP + L-glutamate + ADP + phosphate + 2 H(+). It carries out the reaction L-glutamine + H2O = L-glutamate + NH4(+). It catalyses the reaction UTP + NH4(+) + ATP = CTP + ADP + phosphate + 2 H(+). It functions in the pathway pyrimidine metabolism; CTP biosynthesis via de novo pathway; CTP from UDP: step 2/2. Allosterically activated by GTP, when glutamine is the substrate; GTP has no effect on the reaction when ammonia is the substrate. The allosteric effector GTP functions by stabilizing the protein conformation that binds the tetrahedral intermediate(s) formed during glutamine hydrolysis. Inhibited by the product CTP, via allosteric rather than competitive inhibition. Catalyzes the ATP-dependent amination of UTP to CTP with either L-glutamine or ammonia as the source of nitrogen. Regulates intracellular CTP levels through interactions with the four ribonucleotide triphosphates. The sequence is that of CTP synthase from Wolbachia sp. subsp. Brugia malayi (strain TRS).